We begin with the raw amino-acid sequence, 38 residues long: Large ribosomal subunit protein bL36 (38 aa).

This sequence belongs to the bacterial ribosomal protein bL36 family.

The protein is Large ribosomal subunit protein bL36 of Hamiltonella defensa subsp. Acyrthosiphon pisum (strain 5AT).